Consider the following 102-residue polypeptide: NADH-quinone oxidoreductase subunit K (102 aa).

3 consecutive transmembrane segments (helical) span residues 5 to 25 (LTQY…GIIL), 30 to 50 (IIII…NLVA), and 62 to 82 (IFAL…LAIL).

Belongs to the complex I subunit 4L family. NDH-1 is composed of 14 different subunits. Subunits NuoA, H, J, K, L, M, N constitute the membrane sector of the complex.

Its subcellular location is the cell inner membrane. The enzyme catalyses a quinone + NADH + 5 H(+)(in) = a quinol + NAD(+) + 4 H(+)(out). Functionally, NDH-1 shuttles electrons from NADH, via FMN and iron-sulfur (Fe-S) centers, to quinones in the respiratory chain. The immediate electron acceptor for the enzyme in this species is believed to be ubiquinone. Couples the redox reaction to proton translocation (for every two electrons transferred, four hydrogen ions are translocated across the cytoplasmic membrane), and thus conserves the redox energy in a proton gradient. This chain is NADH-quinone oxidoreductase subunit K, found in Beijerinckia indica subsp. indica (strain ATCC 9039 / DSM 1715 / NCIMB 8712).